A 247-amino-acid chain; its full sequence is Acetoacetate decarboxylase (247 aa).

Catalysis depends on Lys-116, which acts as the Schiff-base intermediate with acetoacetate.

The protein belongs to the ADC family.

It catalyses the reaction acetoacetate + H(+) = acetone + CO2. In terms of biological role, catalyzes the conversion of acetoacetate to acetone and carbon dioxide. The protein is Acetoacetate decarboxylase of Ralstonia nicotianae (strain ATCC BAA-1114 / GMI1000) (Ralstonia solanacearum).